The primary structure comprises 330 residues: Protein C10 (330 aa).

It belongs to the poxviridae C4/C10 protein family.

This chain is Protein C10, found in Homo sapiens (Human).